A 260-amino-acid polypeptide reads, in one-letter code: O-antigen export system permease protein RfbA (260 aa).

The next 7 helical transmembrane spans lie at 31–51, 63–83, 109–129, 139–159, 173–193, 201–221, and 229–249; these read FLGFLWTFLNPTLHMLVYVLL, FPFFMFVGLLPWIWFSTSVGG, VVVTNLCNFVLSLPLMLVLGM, VVLFPVVVLIQLTFTLALTYI, IVSNLLTLWFFATPVLYPLST, SLMLALNPMVSLMTSYQAIFY, and EPLMALAAVSVVLLWAASSIF. The ABC transmembrane type-2 domain maps to 32 to 252; that stretch reads LGFLWTFLNP…WAASSIFESR (221 aa).

It belongs to the ABC-2 integral membrane protein family.

The protein resides in the cell inner membrane. In terms of biological role, may form an ATP-driven O-antigen export apparatus, in association with RfbB. The chain is O-antigen export system permease protein RfbA (rfbA) from Myxococcus xanthus.